The sequence spans 435 residues: GTPase Der (435 aa).

EngA-type G domains lie at Lys4 to Asp167 and Thr175 to Ser350. GTP contacts are provided by residues Gly10–Ser17, Asp57–Ile61, Asn119–Asp122, Gly181–Ser188, Asp228–Ile232, and Asn293–Asp296. In terms of domain architecture, KH-like spans Val351–Lys435.

The protein belongs to the TRAFAC class TrmE-Era-EngA-EngB-Septin-like GTPase superfamily. EngA (Der) GTPase family. Associates with the 50S ribosomal subunit.

In terms of biological role, GTPase that plays an essential role in the late steps of ribosome biogenesis. The sequence is that of GTPase Der from Mycoplasma capricolum subsp. capricolum (strain California kid / ATCC 27343 / NCTC 10154).